The chain runs to 285 residues: GTP-binding protein 8 (285 aa).

An EngB-type G domain is found at 110–283 (QQPEVCFIGR…KCFIADITGS (174 aa)). GTP-binding positions include 118 to 125 (GRSNVGKS), 147 to 151 (GHTKK), 165 to 168 (DMPG), 227 to 230 (TKID), and 262 to 264 (ISA). Mg(2+)-binding residues include Ser-125 and Thr-149.

Belongs to the TRAFAC class TrmE-Era-EngA-EngB-Septin-like GTPase superfamily. EngB GTPase family. Mg(2+) is required as a cofactor.

This is GTP-binding protein 8 (Gtpbp8) from Mus musculus (Mouse).